The following is a 601-amino-acid chain: Terpenoid synthase 17 (601 aa).

Positions 354, 358, 497, 501, and 505 each coordinate Mg(2+). The DDXXD motif; degenerate motif lies at 354–358 (NDTCD).

The protein belongs to the terpene synthase family. Tpsa subfamily. The cofactor is Mg(2+). Requires Mn(2+) as cofactor. As to expression, expressed exclusively in flowers.

The protein localises to the cytoplasm. It functions in the pathway secondary metabolite biosynthesis; terpenoid biosynthesis. In Arabidopsis thaliana (Mouse-ear cress), this protein is Terpenoid synthase 17 (TPS17).